The following is a 90-amino-acid chain: UPF0297 protein Cthe_0151 (90 aa).

The protein belongs to the UPF0297 family.

The sequence is that of UPF0297 protein Cthe_0151 from Acetivibrio thermocellus (strain ATCC 27405 / DSM 1237 / JCM 9322 / NBRC 103400 / NCIMB 10682 / NRRL B-4536 / VPI 7372) (Clostridium thermocellum).